The sequence spans 449 residues: Tubulin beta-4 chain (449 aa).

The MREI motif motif lies at 1-4 (MREI). Residues Q11, E69, S138, G142, T143, G144, N204, and N226 each contribute to the GTP site. A Mg(2+)-binding site is contributed by E69. The disordered stretch occupies residues 421–449 (EYQQYQDATAEEEGEMYEDDEEESEQGAK). Residues 429–449 (TAEEEGEMYEDDEEESEQGAK) show a composition bias toward acidic residues. E438 carries the 5-glutamyl polyglutamate modification. S444 bears the Phosphoserine mark.

Belongs to the tubulin family. In terms of assembly, dimer of alpha and beta chains. A typical microtubule is a hollow water-filled tube with an outer diameter of 25 nm and an inner diameter of 15 nM. Alpha-beta heterodimers associate head-to-tail to form protofilaments running lengthwise along the microtubule wall with the beta-tubulin subunit facing the microtubule plus end conferring a structural polarity. Microtubules usually have 13 protofilaments but different protofilament numbers can be found in some organisms and specialized cells. Mg(2+) serves as cofactor. Some glutamate residues at the C-terminus are polyglycylated, resulting in polyglycine chains on the gamma-carboxyl group. Glycylation is mainly limited to tubulin incorporated into axonemes (cilia and flagella) whereas glutamylation is prevalent in neuronal cells, centrioles, axonemes, and the mitotic spindle. Both modifications can coexist on the same protein on adjacent residues, and lowering polyglycylation levels increases polyglutamylation, and reciprocally. The precise function of polyglycylation is still unclear. Post-translationally, some glutamate residues at the C-terminus are polyglutamylated, resulting in polyglutamate chains on the gamma-carboxyl group. Polyglutamylation plays a key role in microtubule severing by spastin (SPAST). SPAST preferentially recognizes and acts on microtubules decorated with short polyglutamate tails: severing activity by SPAST increases as the number of glutamates per tubulin rises from one to eight, but decreases beyond this glutamylation threshold. As to expression, neuron specific.

The protein localises to the cytoplasm. Its subcellular location is the cytoskeleton. Tubulin is the major constituent of microtubules, a cylinder consisting of laterally associated linear protofilaments composed of alpha- and beta-tubulin heterodimers. Microtubules grow by the addition of GTP-tubulin dimers to the microtubule end, where a stabilizing cap forms. Below the cap, tubulin dimers are in GDP-bound state, owing to GTPase activity of alpha-tubulin. The polypeptide is Tubulin beta-4 chain (Gallus gallus (Chicken)).